Consider the following 517-residue polypeptide: Crotonobetaine/carnitine--CoA ligase (517 aa).

The protein belongs to the ATP-dependent AMP-binding enzyme family.

It catalyses the reaction 4-(trimethylamino)butanoate + ATP + CoA = 4-(trimethylamino)butanoyl-CoA + AMP + diphosphate. The catalysed reaction is crotonobetaine + ATP + CoA = crotonobetainyl-CoA + AMP + diphosphate. The enzyme catalyses (R)-carnitine + ATP + CoA = (R)-carnitinyl-CoA + AMP + diphosphate. Its pathway is amine and polyamine metabolism; carnitine metabolism. Functionally, catalyzes the transfer of CoA to carnitine, generating the initial carnitinyl-CoA needed for the CaiB reaction cycle. Also has activity toward crotonobetaine and gamma-butyrobetaine. This is Crotonobetaine/carnitine--CoA ligase from Salmonella paratyphi C (strain RKS4594).